The chain runs to 136 residues: Large ribosomal subunit protein uL16 (136 aa).

This sequence belongs to the universal ribosomal protein uL16 family. In terms of assembly, part of the 50S ribosomal subunit.

Binds 23S rRNA and is also seen to make contacts with the A and possibly P site tRNAs. This Rickettsia canadensis (strain McKiel) protein is Large ribosomal subunit protein uL16.